A 638-amino-acid polypeptide reads, in one-letter code: Growth hormone receptor (638 aa).

A signal peptide spans 1–18 (MDLWQLLLTVALAGSSDA). Topologically, residues 19 to 264 (FSGSEATPAT…SPFTCEEDFR (246 aa)) are extracellular. The interval 30 to 51 (GRASESVQRVHPGLGTNSSGKP) is disordered. N-linked (GlcNAc...) asparagine glycosylation is present at Asn46. 2 cysteine pairs are disulfide-bonded: Cys56–Cys66 and Cys101–Cys112. Asn115 is a glycosylation site (N-linked (GlcNAc...) asparagine). Cys126 and Cys140 are joined by a disulfide. Residues 151 to 254 (PPIGLNWTLL…EVLYVTLPQM (104 aa)) form the Fibronectin type-III domain. N-linked (GlcNAc...) asparagine glycosylation is found at Asn156, Asn161, and Asn200. The WSXWS motif signature appears at 240–244 (YGEFS). Positions 260 to 262 (EED) are required for ADAM17-mediated proteolysis. The helical transmembrane segment at 265-288 (FPWFLIIIFGIFGLTVMLFVFIFS) threads the bilayer. Topologically, residues 289-638 (KQQRIKMLIL…STDQLNKILP (350 aa)) are cytoplasmic. Positions 294–379 (KMLILPPVPV…HQKSLSVLAA (86 aa)) are required for JAK2 binding. The Box 1 motif motif lies at 297 to 305 (ILPPVPVPK). A UbE motif motif is present at residues 340–349 (DSWVEFIELD). Position 341 is a phosphoserine (Ser341). The residue at position 487 (Tyr487) is a Phosphotyrosine. Residues 573 to 592 (TTTAERSGTAEDAPGSEMPV) are disordered. Phosphotyrosine is present on Tyr595.

The protein belongs to the type I cytokine receptor family. Type 1 subfamily. In terms of assembly, on growth hormone (GH) binding, forms homodimers and binds JAK2 via a box 1-containing domain. In terms of processing, the soluble form (GHBP) is produced by phorbol ester-promoted proteolytic cleavage at the cell surface (shedding) by ADAM17/TACE. Shedding is inhibited by growth hormone (GH) binding to the receptor probably due to a conformational change in GHR rendering the receptor inaccessible to ADAM17. Post-translationally, on GH binding, phosphorylated on tyrosine residues in the cytoplasmic domain by JAK2. Ubiquitinated by the ECS(SOCS2) complex following ligand-binding and phosphorylation by JAK2, leading to its degradation by the proteasome. Regulation by the ECS(SOCS2) complex acts as a negative feedback loop of growth hormone receptor signaling. Ubiquitination is not sufficient for GHR internalization.

The protein localises to the cell membrane. The protein resides in the secreted. Receptor for pituitary gland growth hormone involved in regulating postnatal body growth. On ligand binding, couples to, and activates the JAK2/STAT5 pathway. In terms of biological role, the soluble form acts as a reservoir of growth hormone in plasma and may be a modulator/inhibitor of GH signaling. The protein is Growth hormone receptor of Oryctolagus cuniculus (Rabbit).